A 203-amino-acid chain; its full sequence is Large ribosomal subunit protein bL25 (203 aa).

It belongs to the bacterial ribosomal protein bL25 family. CTC subfamily. As to quaternary structure, part of the 50S ribosomal subunit; part of the 5S rRNA/L5/L18/L25 subcomplex. Contacts the 5S rRNA. Binds to the 5S rRNA independently of L5 and L18.

Functionally, this is one of the proteins that binds to the 5S RNA in the ribosome where it forms part of the central protuberance. In Rickettsia rickettsii (strain Iowa), this protein is Large ribosomal subunit protein bL25.